Consider the following 208-residue polypeptide: uncharacterized protein (208 aa).

The interval 124–208 is disordered; sequence KKTGSSNART…PSFGKYSSLA (85 aa). Basic and acidic residues predominate over residues 133–170; sequence TPDEGKKAKNAPEEEKVKTSGSEDAKGEESAVEGKEPE.

It localises to the golgi apparatus. This is an uncharacterized protein from Encephalitozoon cuniculi (strain GB-M1) (Microsporidian parasite).